We begin with the raw amino-acid sequence, 288 residues long: Scolexin B (288 aa).

Positions 1–20 (MFASKLAVCSALALLAVAHA) are cleaved as a signal peptide. The Peptidase S1 domain maps to 21–287 (APGGNDIQKI…VRDWIKKVTN (267 aa)). The segment at 27 to 56 (IQKITKAPNVPTKAEGDAASKASAPAIPPK) is disordered. Cysteines 72 and 88 form a disulfide. Residues H87 and D145 each act as charge relay system in the active site. 2 disulfide bridges follow: C210-C223 and C235-C264. The Charge relay system role is filled by S239.

Belongs to the peptidase S1 family.

In Heliothis virescens (Tobacco budworm moth), this protein is Scolexin B.